The following is a 295-amino-acid chain: sn-glycerol-3-phosphate transport system permease protein UgpA (295 aa).

Over 1-11 (MSPSRPGFSCS) the chain is Cytoplasmic. A helical membrane pass occupies residues 12–32 (WLPYLLVLPQLAITAIFFLWP). At 33–80 (AGEALWYSVQTLDPFGLSSEFVGLSNFIQLFQDEYYLASFYTTLIFSA) the chain is on the periplasmic side. An ABC transmembrane type-1 domain is found at 72 to 284 (FYTTLIFSAL…LLVIGLTVIQ (213 aa)). Residues 81 to 101 (LVAGIGLIVSLFLAAMVNYVL) form a helical membrane-spanning segment. Residues 102–109 (RGSRLYQT) lie on the Cytoplasmic side of the membrane. A helical transmembrane segment spans residues 110 to 130 (LLILPYAVAPAVAAVLWIFLF). Over 131–157 (DPGLGLITHALAKLGYSWNHAQNSGQA) the chain is Periplasmic. Residues 158 to 178 (MFLVVLASVWKQISYNFLFFL) form a helical membrane-spanning segment. Residues 179 to 207 (AALQSIPKSLVEAAAIDGAGPVRRFFNLV) lie on the Cytoplasmic side of the membrane. Residues 208-228 (LPLISPVSFFLLVVNLVYAFF) traverse the membrane as a helical segment. Residues 229-262 (DTFPVIDAATGGGPVQATTTLIYKIYREGFAGLD) are Periplasmic-facing. Residues 263 to 283 (LSSSAAQSVILMLLVIGLTVI) traverse the membrane as a helical segment. Topologically, residues 284–295 (QFRFVERKVRYQ) are cytoplasmic.

It belongs to the binding-protein-dependent transport system permease family. UgpAE subfamily. In terms of assembly, the complex is composed of two ATP-binding proteins (UgpC), two transmembrane proteins (UgpA and UgpE) and a solute-binding protein (UgpB).

It is found in the cell inner membrane. Functionally, part of the ABC transporter complex UgpBAEC involved in sn-glycerol-3-phosphate (G3P) import. Probably responsible for the translocation of the substrate across the membrane. This Yersinia pestis bv. Antiqua (strain Antiqua) protein is sn-glycerol-3-phosphate transport system permease protein UgpA (ugpA).